Consider the following 552-residue polypeptide: Sensor histidine kinase DpiB (552 aa).

Residues 1–21 (MLQLNENKQFAFFQRLAFPLR) lie on the Cytoplasmic side of the membrane. Residues 22–42 (IFLLILVFSIFVIAALAQYFT) traverse the membrane as a helical segment. Topologically, residues 43-182 (ASFEDYLTLH…DSWRAEFLLP (140 aa)) are periplasmic. A helical transmembrane segment spans residues 183-203 (MAGVFVVLLGILMLLSWFLAA). Over 204–552 (HIRRQMMGME…NDSSINPIDR (349 aa)) the chain is Cytoplasmic. One can recognise a PAS domain in the interval 222 to 292 (RQQEALFSSV…IDEKRQDVVA (71 aa)). Residues 344–541 (TLRHEHLNWM…LFSIYIPKVK (198 aa)) form the Histidine kinase domain. Phosphohistidine; by autocatalysis is present on histidine 347.

In terms of processing, autophosphorylated.

It localises to the cell inner membrane. The catalysed reaction is ATP + protein L-histidine = ADP + protein N-phospho-L-histidine.. Its activity is regulated as follows. Autophosphorylation is induced in vitro by dithiothreitol (DTT). Its function is as follows. Member of the two-component regulatory system DpiA/DpiB, which is essential for expression of citrate-specific fermentation genes and genes involved in plasmid inheritance. Could be involved in response to both the presence of citrate and external redox conditions. Functions as a sensor kinase that phosphorylates DpiA in the presence of citrate. The chain is Sensor histidine kinase DpiB (dpiB) from Escherichia coli (strain K12).